The primary structure comprises 410 residues: Cytochrome P450 monooxygenase mpsF (410 aa).

C355 contacts heme.

Belongs to the cytochrome P450 family. Requires heme as cofactor.

It participates in secondary metabolite biosynthesis. Cytochrome P450 monooxygenase; part of the gene cluster that mediates the biosynthesis of macrophasetins, 3-decalinoyltetramic acids (DTAs) which feature a tetramate (pyrrolidine-2,4-dione) unit connected to a decalin fragment and that have potent bioactivities. The PKS-NRPS mpsA together with its associated enoylreductase partner mpsG incorporate one unit of acetyl-CoA, seven units of malonyl-CoA, and one unit of L-alanine to assemble the linear tetramic acid intermediate corresponding to the backbone of macrophasetins. Without the Diels-Alderase mpsD, the mpsA/G product can undergo the non-enzymatic intramolecular Diels-Alder (IMDA) reaction to generate both macrophasetin A and macrophasetin B. Catalyzed by mpsD, the linear tetramic acid intermediate is thoroughly converted to macrophasetin A via the endo-IMDA reaction in a regioselective and stereoselective manner. Finally, the cytochrome P450 monooxygenase mpsF catalyzes the hydroxylation at C20 to yield the end product macrophasetin C. This Macrophomina phaseolina (strain MS6) (Charcoal rot fungus) protein is Cytochrome P450 monooxygenase mpsF.